The chain runs to 183 residues: TATA box-binding protein-like 1 (183 aa).

Belongs to the TBP family. Binds TFIIA and TFIIB. As to expression, present in the brain, heart, liver and gizzard.

Its subcellular location is the cytoplasm. It localises to the nucleus. Its function is as follows. Part of a specialized transcription system that mediates the transcription of most ribosomal proteins through the 5'-TCT-3' motif which is a core promoter element at these genes. Seems to also mediate the transcription of NF1. Does not bind the TATA box. The chain is TATA box-binding protein-like 1 (TBPL1) from Gallus gallus (Chicken).